The sequence spans 194 residues: Fe/S biogenesis protein NfuA (194 aa).

Residues Cys152 and Cys155 each contribute to the [4Fe-4S] cluster site.

The protein belongs to the NfuA family. In terms of assembly, homodimer. Requires [4Fe-4S] cluster as cofactor.

Involved in iron-sulfur cluster biogenesis. Binds a 4Fe-4S cluster, can transfer this cluster to apoproteins, and thereby intervenes in the maturation of Fe/S proteins. Could also act as a scaffold/chaperone for damaged Fe/S proteins. The chain is Fe/S biogenesis protein NfuA from Pseudomonas fluorescens (strain SBW25).